The sequence spans 232 residues: Zinc import ATP-binding protein ZnuC (232 aa).

The ABC transporter domain occupies Val5–Tyr220. Residue Gly37–Ser44 coordinates ATP.

Belongs to the ABC transporter superfamily. Zinc importer (TC 3.A.1.15.5) family. In terms of assembly, the complex is composed of two ATP-binding proteins (ZnuC), two transmembrane proteins (ZnuB) and a solute-binding protein (ZnuA).

The protein localises to the cell membrane. It carries out the reaction Zn(2+)(out) + ATP(in) + H2O(in) = Zn(2+)(in) + ADP(in) + phosphate(in) + H(+)(in). Part of the ABC transporter complex ZnuABC involved in zinc import. Responsible for energy coupling to the transport system. The sequence is that of Zinc import ATP-binding protein ZnuC from Wigglesworthia glossinidia brevipalpis.